Reading from the N-terminus, the 340-residue chain is MSELEQLRQEAEQLRNQIRDARKACGDSTLTQITAGLDPVGRIQMRTRRTLRGHLAKIYAMHWGTDSRLLVSASQDGKLIIWDSYTTNKVHAIPLRSSWVMTCAYAPSGNFVACGGLDNICSIYSLKTREGNVRVSRELPGHTGYLSCCRFLDDNQIITSSGDTTCALWDIETGQQTVGFAGHSGDVMSLSLAPDGRTFVSGACDASIKLWDVRDSMCRQTFIGHESDINAVAFFPNGYAFTTGSDDATCRLFDLRADQELLMYSHDNIICGITSVAFSRSGRLLLAGYDDFNCNIWDAMKGDRAGVLAGHDNRVSCLGVTDDGMAVATGSWDSFLKIWN.

Position 2 is an N-acetylserine (serine 2). WD repeat units follow at residues 53-83 (GHLAKIYAMHWGTDSRLLVSASQDGKLIIWD), 95-125 (LRSSWVMTCAYAPSGNFVACGGLDNICSIYS), 141-170 (GHTGYLSCCRFLDDNQIITSSGDTTCALWD), 182-212 (GHSGDVMSLSLAPDGRTFVSGACDASIKLWD), 224-254 (GHESDINAVAFFPNGYAFTTGSDDATCRLFD), 268-298 (NIICGITSVAFSRSGRLLLAGYDDFNCNIWD), and 310-340 (GHDNRVSCLGVTDDGMAVATGSWDSFLKIWN). Tyrosine 239 is modified (phosphotyrosine).

Belongs to the WD repeat G protein beta family. In terms of assembly, g proteins are composed of 3 units, alpha, beta and gamma. In this context, interacts with GNAI2 and GNG2. Interacts with ARHGEF18 and RASD2. Interacts with ATXN10. Interacts with SCN8A. In terms of tissue distribution, expressed in all cardiac subcompartments and in the brain, with highest levels in the atrioventricular node and brain.

It is found in the cytoplasm. The protein resides in the perinuclear region. Its subcellular location is the cell membrane. In terms of biological role, guanine nucleotide-binding proteins (G proteins) are involved as a modulator or transducer in various transmembrane signaling systems. The beta and gamma chains are required for the GTPase activity, for replacement of GDP by GTP, and for G protein-effector interaction. This Homo sapiens (Human) protein is Guanine nucleotide-binding protein G(I)/G(S)/G(T) subunit beta-2 (GNB2).